We begin with the raw amino-acid sequence, 396 residues long: S-adenosylmethionine synthase (396 aa).

ATP is bound at residue His-16. Asp-18 lines the Mg(2+) pocket. K(+) is bound at residue Glu-44. L-methionine-binding residues include Glu-57 and Gln-100. Positions 100-110 are flexible loop; sequence QSQDIARGVDN. ATP is bound by residues 162–164, Asp-237, 243–244, Ala-260, and Lys-264; these read DGK and RK. Position 237 (Asp-237) interacts with L-methionine. Residue Lys-268 coordinates L-methionine.

Belongs to the AdoMet synthase family. In terms of assembly, homotetramer; dimer of dimers. Mg(2+) is required as a cofactor. K(+) serves as cofactor.

It localises to the cytoplasm. It carries out the reaction L-methionine + ATP + H2O = S-adenosyl-L-methionine + phosphate + diphosphate. The protein operates within amino-acid biosynthesis; S-adenosyl-L-methionine biosynthesis; S-adenosyl-L-methionine from L-methionine: step 1/1. Functionally, catalyzes the formation of S-adenosylmethionine (AdoMet) from methionine and ATP. The overall synthetic reaction is composed of two sequential steps, AdoMet formation and the subsequent tripolyphosphate hydrolysis which occurs prior to release of AdoMet from the enzyme. This is S-adenosylmethionine synthase from Myxococcus xanthus.